The chain runs to 421 residues: Pyridinium-3,5-bisthiocarboxylic acid mononucleotide nickel insertion protein (421 aa).

Belongs to the LarC family.

It carries out the reaction Ni(II)-pyridinium-3,5-bisthiocarboxylate mononucleotide = pyridinium-3,5-bisthiocarboxylate mononucleotide + Ni(2+). Involved in the biosynthesis of a nickel-pincer cofactor ((SCS)Ni(II) pincer complex). Binds Ni(2+), and functions in nickel delivery to pyridinium-3,5-bisthiocarboxylic acid mononucleotide (P2TMN), to form the mature cofactor. Is thus probably required for the activation of nickel-pincer cofactor-dependent enzymes. The protein is Pyridinium-3,5-bisthiocarboxylic acid mononucleotide nickel insertion protein of Alkaliphilus metalliredigens (strain QYMF).